The chain runs to 186 residues: MIRRLEYYGSPILRKKSSPIAEITDEIRNLVSDMCDTMEAHRGVGLAAPQVGKNVSLFVMCVDRETEDGELIFSESPRVFINPVLSDPSETPIIGKEGCLSIPGLRGEVFRPQKITVTAMDLNGKIFTEHLEGFTARIIMHETDHLNGVLYIDLMEEPKDPKKFKASLEKIKRRYNTHLSKEELVS.

Fe cation-binding residues include Cys99 and His141. Residue Glu142 is part of the active site. A Fe cation-binding site is contributed by His145.

This sequence belongs to the polypeptide deformylase family. Fe(2+) is required as a cofactor.

It carries out the reaction N-terminal N-formyl-L-methionyl-[peptide] + H2O = N-terminal L-methionyl-[peptide] + formate. Removes the formyl group from the N-terminal Met of newly synthesized proteins. Requires at least a dipeptide for an efficient rate of reaction. N-terminal L-methionine is a prerequisite for activity but the enzyme has broad specificity at other positions. This is Peptide deformylase from Chlamydia pneumoniae (Chlamydophila pneumoniae).